The sequence spans 202 residues: Alpha-S1-casein (202 aa).

Disordered stretches follow at residues 1 to 25 and 51 to 84; these read RPKL…VLKE and LKEK…VVPI. Basic and acidic residues-rich tracts occupy residues 16–25 and 51–63; these read QDSREKVLKE and LKEK…KEYL. Phosphoserine is present on S18. Over residues 70–80 the composition is skewed to low complexity; sequence QESSSTSSSEE. S72, S73, S74, S76, S77, and S78 each carry phosphoserine.

This sequence belongs to the alpha-casein family. Mammary gland specific. Secreted in milk.

It is found in the secreted. In terms of biological role, important role in the capacity of milk to transport calcium phosphate. The chain is Alpha-S1-casein from Equus asinus (Donkey).